We begin with the raw amino-acid sequence, 179 residues long: MLSYFKELSLNRTAWLLLAFVAFALEASAIYFQYGMGLVPCVMCVYERLAIFGLLIAGLVGAISPRFFLTRWLALLLWGFSAFKGLALAIKHHDYQANPSPWNQCEFKPEFPQTMPFDQWFPSIFAPGPVNCSEKQWEMFGLGMPEWLILAFSIFALMFVIVLLSQFKRAKPQYRSVFR.

The Cytoplasmic segment spans residues 1-14; that stretch reads MLSYFKELSLNRTA. The chain crosses the membrane as a helical span at residues 15-31; sequence WLLLAFVAFALEASAIY. The Periplasmic segment spans residues 32–49; sequence FQYGMGLVPCVMCVYERL. Cys41 and Cys44 are oxidised to a cystine. The chain crosses the membrane as a helical span at residues 50 to 65; sequence AIFGLLIAGLVGAISP. At 66 to 72 the chain is on the cytoplasmic side; sequence RFFLTRW. The chain crosses the membrane as a helical span at residues 73-90; that stretch reads LALLLWGFSAFKGLALAI. Residues 91–146 are Periplasmic-facing; it reads KHHDYQANPSPWNQCEFKPEFPQTMPFDQWFPSIFAPGPVNCSEKQWEMFGLGMPE. Cys105 and Cys132 are disulfide-bonded. Residues 147-165 form a helical membrane-spanning segment; the sequence is WLILAFSIFALMFVIVLLS. Over 166–179 the chain is Cytoplasmic; the sequence is QFKRAKPQYRSVFR.

Belongs to the DsbB family.

It localises to the cell inner membrane. Functionally, required for disulfide bond formation in some periplasmic proteins. Acts by oxidizing the DsbA protein. The polypeptide is Disulfide bond formation protein B (Actinobacillus pleuropneumoniae serotype 5b (strain L20)).